A 587-amino-acid polypeptide reads, in one-letter code: ATP-dependent lipid A-core flippase (587 aa).

Transmembrane regions (helical) follow at residues 31–51 (LIVS…LIYL), 68–88 (LKMM…TNFI), 145–165 (GSLI…AVMF), 166–186 (YTSW…AVLI), and 259–279 (VQVI…TPLI). One can recognise an ABC transmembrane type-1 domain in the interval 32 to 315 (IVSGVALVFN…LTAVNAQFQS (284 aa)). Residues 347–583 (LEFKNVSFAY…NGAYKQLHSM (237 aa)) enclose the ABC transporter domain. 381-388 (GRSGSGKS) serves as a coordination point for ATP.

Belongs to the ABC transporter superfamily. Lipid exporter (TC 3.A.1.106) family. Homodimer.

It localises to the cell inner membrane. The enzyme catalyses ATP + H2O + lipid A-core oligosaccharideSide 1 = ADP + phosphate + lipid A-core oligosaccharideSide 2.. In terms of biological role, involved in lipopolysaccharide (LPS) biosynthesis. Translocates lipid A-core from the inner to the outer leaflet of the inner membrane. Transmembrane domains (TMD) form a pore in the inner membrane and the ATP-binding domain (NBD) is responsible for energy generation. The chain is ATP-dependent lipid A-core flippase from Haemophilus influenzae (strain ATCC 51907 / DSM 11121 / KW20 / Rd).